Here is a 309-residue protein sequence, read N- to C-terminus: Wall-associated proteinase (309 aa).

N-linked (GlcNAc...) asparagine glycosylation is found at N190 and N295.

The protein resides in the secreted. The protein localises to the cell wall. Its subcellular location is the membrane. In terms of biological role, may participate in wall plasticization and/or intussusception or in cell wall turnover. The protein is Wall-associated proteinase of Coccidioides posadasii (strain RMSCC 757 / Silveira) (Valley fever fungus).